A 193-amino-acid chain; its full sequence is Adenine phosphoribosyltransferase (193 aa).

The protein belongs to the purine/pyrimidine phosphoribosyltransferase family. In terms of assembly, homodimer.

It localises to the cytoplasm. It carries out the reaction AMP + diphosphate = 5-phospho-alpha-D-ribose 1-diphosphate + adenine. Its pathway is purine metabolism; AMP biosynthesis via salvage pathway; AMP from adenine: step 1/1. In terms of biological role, catalyzes a salvage reaction resulting in the formation of AMP, that is energically less costly than de novo synthesis. The sequence is that of Adenine phosphoribosyltransferase from Bifidobacterium longum (strain NCC 2705).